The following is a 21-amino-acid chain: Cupiennin-6a (21 aa).

At Ser-21 the chain carries Serine amide.

Expressed by the venom gland.

The protein localises to the secreted. The chain is Cupiennin-6a from Cupiennius salei (American wandering spider).